We begin with the raw amino-acid sequence, 325 residues long: Myo-inositol dehydrogenase Hyg17 (325 aa).

The protein belongs to the Gfo/Idh/MocA family.

It carries out the reaction myo-inositol + NAD(+) = myo-inosose-5 + NADH + H(+). It participates in antibiotic biosynthesis. In terms of biological role, dehydrogenase involved in the biosynthesis of the aminocyclitol moiety of hygromycin A, a broad-spectrum antibiotic. Catalyzes the NAD(+)-dependent oxidation of myo-inositol to myo-inosose-5 (neo-inosose). Shows reduced activity with scyllo-inositol, minimal activity with L-chiro-inositol and no activity with D-glucose, D-chiro-inositol, epi-inositol, muco-inositol and allo-inositol. Is specific for NAD(+) and cannot use NADP(+). The polypeptide is Myo-inositol dehydrogenase Hyg17 (Streptomyces leeuwenhoekii).